The following is a 329-amino-acid chain: Bile salt hydrolase/transferase (329 aa).

Cys2 (nucleophile; acyl-thioester intermediate) is an active-site residue. Deoxycholate-binding residues include Cys2 and Arg18. Asn82 is a binding site for taurine.

This sequence belongs to the peptidase C59 family. In terms of assembly, homotetramer. The tetramer consists of a dimer of dimers.

The catalysed reaction is glycocholate + H2O = cholate + glycine. The enzyme catalyses cholate + taurine = taurocholate + H2O. It carries out the reaction taurodeoxycholate + H2O = deoxycholate + taurine. It catalyses the reaction glycodeoxycholate + H2O = deoxycholate + glycine. The catalysed reaction is chenodeoxycholate + glycine = glycochenodeoxycholate + H2O. The enzyme catalyses taurochenodeoxycholate + H2O = chenodeoxycholate + taurine. It carries out the reaction an L-alpha-amino acid + cholate = an N-choloyl-L-alpha-amino acid + H2O. It catalyses the reaction an L-alpha-amino acid + taurocholate = an N-choloyl-L-alpha-amino acid + taurine. The catalysed reaction is glycocholate + an L-alpha-amino acid = an N-choloyl-L-alpha-amino acid + glycine. The enzyme catalyses cholate + L-histidine = L-histidocholate + H2O. It carries out the reaction taurocholate + L-histidine = L-histidocholate + taurine. It catalyses the reaction glycocholate + L-histidine = L-histidocholate + glycine. The catalysed reaction is cholate + L-arginine = L-arginocholate + H2O. The enzyme catalyses taurocholate + L-arginine = L-arginocholate + taurine. It carries out the reaction glycocholate + L-arginine = L-arginocholate + glycine. It catalyses the reaction cholate + L-phenylalanine = L-phenylalanocholate + H2O. The catalysed reaction is taurocholate + L-phenylalanine = L-phenylalanocholate + taurine. The protein operates within lipid metabolism; bile acid biosynthesis. Possesses dual functions in bile acid metabolism. Acts as a bile salt hydrolase that catalyzes the deconjugation of glycine- and taurine-linked bile salts, which occurs naturally in the intestines of humans, releasing amino acid residues and deconjugated bile salts (bile acids). Can hydrolyze the amide bond in major human conjugated bile salts, such as glycocholate (GCA), taurocholate (TCA) and taurodeoxycholate (TDCA). Shows a slight preference for taurine-conjugated bile acids as substrates. Also acts as an amine N-acyltransferase that conjugates a wide variety of amino acids to conjugated and non-conjugated bile acids, thus producing bacterial bile acid amidates (BBAAs) - also named microbially conjugated bile acids (MCBAs) - in the gastrointestinal tract. These BBAAs may facilitate communication between the microbiota and host through the activation of human ligand-activated transcription factors. In Clostridium perfringens (strain 13 / Type A), this protein is Bile salt hydrolase/transferase (cbh).